The sequence spans 247 residues: Myelin-oligodendrocyte glycoprotein (247 aa).

A signal peptide spans 1 to 29; the sequence is MASLSRPSLPSCLCSFLLLLLLQVSSSYA. Residues 30-154 are Extracellular-facing; it reads GQFRVIGPRQ…EDPFYWVSPA (125 aa). The Ig-like V-type domain occupies 31–145; sequence QFRVIGPRQP…EEAAIELKVE (115 aa). A disulfide bridge links C53 with C127. N60 is a glycosylation site (N-linked (GlcNAc...) asparagine). Residues 155–175 form a helical membrane-spanning segment; the sequence is VLVLLAVLPVLLLQITVGLVF. The Cytoplasmic portion of the chain corresponds to 176–210; sequence LCLQYRLRGKLRAEIENLHRTFDPHFLRVPCWKIT. A helical transmembrane segment spans residues 211–231; sequence LFVIVPVLGPLVALIICYNWL. At 232–247 the chain is on the extracellular side; sequence HRRLAGQFLEELRNPF.

It belongs to the immunoglobulin superfamily. BTN/MOG family. Homodimer.

Its subcellular location is the membrane. Functionally, minor component of the myelin sheath. May be involved in completion and/or maintenance of the myelin sheath and in cell-cell communication. Mediates homophilic cell-cell adhesion. This is Myelin-oligodendrocyte glycoprotein (MOG) from Macaca fascicularis (Crab-eating macaque).